We begin with the raw amino-acid sequence, 386 residues long: Succinate--CoA ligase [ADP-forming] subunit beta (386 aa).

The ATP-grasp domain occupies 9 to 244 (KAVLRSYGVS…LDEEDAKEIE (236 aa)). Residues lysine 46, 53–55 (GRG), glutamate 99, cysteine 102, and glutamate 107 contribute to the ATP site. Residues asparagine 199 and aspartate 213 each coordinate Mg(2+). Residues asparagine 264 and 321 to 323 (GIM) contribute to the substrate site.

This sequence belongs to the succinate/malate CoA ligase beta subunit family. In terms of assembly, heterotetramer of two alpha and two beta subunits. Mg(2+) is required as a cofactor.

The catalysed reaction is succinate + ATP + CoA = succinyl-CoA + ADP + phosphate. It carries out the reaction GTP + succinate + CoA = succinyl-CoA + GDP + phosphate. It participates in carbohydrate metabolism; tricarboxylic acid cycle; succinate from succinyl-CoA (ligase route): step 1/1. In terms of biological role, succinyl-CoA synthetase functions in the citric acid cycle (TCA), coupling the hydrolysis of succinyl-CoA to the synthesis of either ATP or GTP and thus represents the only step of substrate-level phosphorylation in the TCA. The beta subunit provides nucleotide specificity of the enzyme and binds the substrate succinate, while the binding sites for coenzyme A and phosphate are found in the alpha subunit. The sequence is that of Succinate--CoA ligase [ADP-forming] subunit beta from Bacillus thuringiensis (strain Al Hakam).